The chain runs to 159 residues: Protein A40 (159 aa).

Topologically, residues 1 to 9 are cytoplasmic; that stretch reads MNKHKTDYA. A helical; Signal-anchor for type II membrane protein membrane pass occupies residues 10–30; that stretch reads GYACCVICGLIVGIIFTATLL. Over 31–159 the chain is Extracellular; it reads KVVERKLVHT…TPKLHSCYTI (129 aa). Residues 63 to 159 enclose the C-type lectin domain; the sequence is YNNKCIHLST…TPKLHSCYTI (97 aa).

This sequence belongs to the poxviridae A40 protein family.

It localises to the host membrane. In Bos taurus (Bovine), this protein is Protein A40.